A 214-amino-acid chain; its full sequence is Adenylate kinase (214 aa).

10 to 15 (GAGKGT) provides a ligand contact to ATP. The NMP stretch occupies residues 30-59 (STGDIFRANIKNGTELGKKAKTYMDQGALV). Residues threonine 31, arginine 36, 57 to 59 (ALV), 85 to 88 (GFPR), and glutamine 92 contribute to the AMP site. Residues 126–163 (GRRACLNCGATYHIVFNPTKVEGKCDACGADTVLRDDD) form an LID region. Arginine 127 is an ATP binding site. Zn(2+) contacts are provided by cysteine 130 and cysteine 133. An ATP-binding site is contributed by 136–137 (TY). Positions 150 and 153 each coordinate Zn(2+). Residues arginine 160 and arginine 171 each coordinate AMP. Residue lysine 199 coordinates ATP.

This sequence belongs to the adenylate kinase family. As to quaternary structure, monomer.

The protein localises to the cytoplasm. It catalyses the reaction AMP + ATP = 2 ADP. The protein operates within purine metabolism; AMP biosynthesis via salvage pathway; AMP from ADP: step 1/1. Functionally, catalyzes the reversible transfer of the terminal phosphate group between ATP and AMP. Plays an important role in cellular energy homeostasis and in adenine nucleotide metabolism. This is Adenylate kinase from Agathobacter rectalis (strain ATCC 33656 / DSM 3377 / JCM 17463 / KCTC 5835 / VPI 0990) (Eubacterium rectale).